Reading from the N-terminus, the 246-residue chain is Type III pantothenate kinase (246 aa).

6–13 is an ATP binding site; sequence DVGNTHSV. Position 103–106 (103–106) interacts with substrate; that stretch reads GADR. Aspartate 105 acts as the Proton acceptor in catalysis. Aspartate 125 is a K(+) binding site. ATP is bound at residue threonine 128. Threonine 179 serves as a coordination point for substrate.

This sequence belongs to the type III pantothenate kinase family. Homodimer. NH4(+) is required as a cofactor. It depends on K(+) as a cofactor.

The protein localises to the cytoplasm. The catalysed reaction is (R)-pantothenate + ATP = (R)-4'-phosphopantothenate + ADP + H(+). The protein operates within cofactor biosynthesis; coenzyme A biosynthesis; CoA from (R)-pantothenate: step 1/5. In terms of biological role, catalyzes the phosphorylation of pantothenate (Pan), the first step in CoA biosynthesis. The protein is Type III pantothenate kinase of Thermotoga sp. (strain RQ2).